A 402-amino-acid chain; its full sequence is 1-deoxy-D-xylulose 5-phosphate reductoisomerase (402 aa).

Threonine 21, glycine 22, serine 23, isoleucine 24, glycine 47, asparagine 50, and asparagine 127 together coordinate NADPH. Lysine 128 is a 1-deoxy-D-xylulose 5-phosphate binding site. An NADPH-binding site is contributed by glutamate 129. A Mn(2+)-binding site is contributed by aspartate 151. 1-deoxy-D-xylulose 5-phosphate is bound by residues serine 152, glutamate 153, serine 177, and histidine 200. Glutamate 153 is a binding site for Mn(2+). Position 206 (glycine 206) interacts with NADPH. Residues serine 213, asparagine 218, lysine 219, and glutamate 222 each contribute to the 1-deoxy-D-xylulose 5-phosphate site. Glutamate 222 contributes to the Mn(2+) binding site.

This sequence belongs to the DXR family. Mg(2+) serves as cofactor. Mn(2+) is required as a cofactor.

It carries out the reaction 2-C-methyl-D-erythritol 4-phosphate + NADP(+) = 1-deoxy-D-xylulose 5-phosphate + NADPH + H(+). The protein operates within isoprenoid biosynthesis; isopentenyl diphosphate biosynthesis via DXP pathway; isopentenyl diphosphate from 1-deoxy-D-xylulose 5-phosphate: step 1/6. Functionally, catalyzes the NADPH-dependent rearrangement and reduction of 1-deoxy-D-xylulose-5-phosphate (DXP) to 2-C-methyl-D-erythritol 4-phosphate (MEP). This is 1-deoxy-D-xylulose 5-phosphate reductoisomerase from Mycobacterium ulcerans (strain Agy99).